The primary structure comprises 351 residues: N(4)-bis(aminopropyl)spermidine synthase (351 aa).

Belongs to the branched-chain polyamine synthase family.

The protein localises to the cytoplasm. It carries out the reaction 2 S-adenosyl 3-(methylsulfanyl)propylamine + spermidine = N(4)-bis(aminopropyl)spermidine + 2 S-methyl-5'-thioadenosine + 2 H(+). Its pathway is amine and polyamine biosynthesis. In terms of biological role, involved in the biosynthesis of branched-chain polyamines, which support the growth of thermophiles under high-temperature conditions. Catalyzes the sequential condensation of spermidine with the aminopropyl groups of decarboxylated S-adenosylmethionines to produce N(4)-bis(aminopropyl)spermidine via N(4)-aminopropylspermidine. Can also use spermine to produce N(4)-aminopropylspermine. This chain is N(4)-bis(aminopropyl)spermidine synthase, found in Thermococcus kodakarensis (strain ATCC BAA-918 / JCM 12380 / KOD1) (Pyrococcus kodakaraensis (strain KOD1)).